The chain runs to 147 residues: UPF0208 membrane protein PM0703 (147 aa).

A run of 2 helical transmembrane segments spans residues 32–52 (VIKA…FAIT) and 65–85 (LAIA…GLYW).

The protein belongs to the UPF0208 family.

It localises to the cell inner membrane. The chain is UPF0208 membrane protein PM0703 from Pasteurella multocida (strain Pm70).